The sequence spans 305 residues: Cell division control protein 2 homolog C (305 aa).

Positions Tyr-4–Phe-297 constitute a Protein kinase domain. ATP is bound by residues Val-10–Val-18 and Lys-33. Thr-14 bears the Phosphothreonine mark. A Phosphotyrosine modification is found at Tyr-15. Catalysis depends on Asp-138, which acts as the Proton acceptor. Thr-172 carries the phosphothreonine; by CAK modification.

It belongs to the protein kinase superfamily. CMGC Ser/Thr protein kinase family. CDC2/CDKX subfamily.

It carries out the reaction L-seryl-[protein] + ATP = O-phospho-L-seryl-[protein] + ADP + H(+). It catalyses the reaction L-threonyl-[protein] + ATP = O-phospho-L-threonyl-[protein] + ADP + H(+). The enzyme catalyses [DNA-directed RNA polymerase] + ATP = phospho-[DNA-directed RNA polymerase] + ADP + H(+). In terms of biological role, plays a key role in the control of the eukaryotic cell cycle. This Antirrhinum majus (Garden snapdragon) protein is Cell division control protein 2 homolog C (CDC2C).